We begin with the raw amino-acid sequence, 435 residues long: Islet cell autoantigen 1-like protein (435 aa).

The region spanning 44–247 (ASDAELDAKL…TAQMMSQIQE (204 aa)) is the AH domain. Residues 391-435 (WASQEGSEHSDTLPVPSQHPKKLKYLGPLSNPDAIGHSDDELLNA) are disordered. A compositionally biased stretch (basic and acidic residues) spans 426 to 435 (GHSDDELLNA).

This Rattus norvegicus (Rat) protein is Islet cell autoantigen 1-like protein (Ica1l).